We begin with the raw amino-acid sequence, 95 residues long: Aspartyl/glutamyl-tRNA(Asn/Gln) amidotransferase subunit C (95 aa).

Belongs to the GatC family. Heterotrimer of A, B and C subunits.

The enzyme catalyses L-glutamyl-tRNA(Gln) + L-glutamine + ATP + H2O = L-glutaminyl-tRNA(Gln) + L-glutamate + ADP + phosphate + H(+). It catalyses the reaction L-aspartyl-tRNA(Asn) + L-glutamine + ATP + H2O = L-asparaginyl-tRNA(Asn) + L-glutamate + ADP + phosphate + 2 H(+). Allows the formation of correctly charged Asn-tRNA(Asn) or Gln-tRNA(Gln) through the transamidation of misacylated Asp-tRNA(Asn) or Glu-tRNA(Gln) in organisms which lack either or both of asparaginyl-tRNA or glutaminyl-tRNA synthetases. The reaction takes place in the presence of glutamine and ATP through an activated phospho-Asp-tRNA(Asn) or phospho-Glu-tRNA(Gln). The polypeptide is Aspartyl/glutamyl-tRNA(Asn/Gln) amidotransferase subunit C (Dehalococcoides mccartyi (strain ATCC BAA-2100 / JCM 16839 / KCTC 5957 / BAV1)).